Here is a 60-residue protein sequence, read N- to C-terminus: Large ribosomal subunit protein uL30 (60 aa).

It belongs to the universal ribosomal protein uL30 family. In terms of assembly, part of the 50S ribosomal subunit.

In Lactobacillus johnsonii (strain CNCM I-12250 / La1 / NCC 533), this protein is Large ribosomal subunit protein uL30.